We begin with the raw amino-acid sequence, 166 residues long: Probable RNA-binding protein EIF1AD (166 aa).

An S1-like domain is found at 5-89 (TKRKHVVKEV…VKAEISFVLC (85 aa)). The Nuclear localization signal signature appears at 6 to 12 (KRKHVVK). Phosphothreonine is present on Thr-33. The Nuclear localization signal motif lies at 56-65 (KYRKNIWIKR). The tract at residues 114–166 (NNNRNRQTQPELPAEPQLSGEESSSEDDSDLFVNTNRRQYRESEEESEEEEAA) is disordered. Residues Ser-132, Ser-136, Ser-137, Ser-138, Ser-156, and Ser-160 each carry the phosphoserine modification. Positions 156–166 (SEEESEEEEAA) are enriched in acidic residues.

Belongs to the EIF1AD family. In terms of assembly, interacts with GAPDH and STAT1.

It localises to the nucleus. Plays a role into cellular response to oxidative stress. Decreases cell proliferation. In Pongo abelii (Sumatran orangutan), this protein is Probable RNA-binding protein EIF1AD (EIF1AD).